Reading from the N-terminus, the 519-residue chain is uncharacterized protein (519 aa).

Over residues 477–486 (IKRERAHVTQ) the composition is skewed to basic residues. Positions 477–519 (IKRERAHVTQRNKPPPSGGDTAVAEGFEPPDGVSRLSLSRRVH) are disordered.

This is an uncharacterized protein from Mycobacterium tuberculosis (strain ATCC 25618 / H37Rv).